A 94-amino-acid chain; its full sequence is Small ubiquitin-related modifier 3 (94 aa).

Lysine 11 is covalently cross-linked (Glycyl lysine isopeptide (Lys-Gly) (interchain with G-Cter in SUMO)). The Ubiquitin-like domain occupies 15-92 (DHINLKVAGQ…IDVFQQQTGG (78 aa)). Residue glycine 92 forms a Glycyl lysine isopeptide (Gly-Lys) (interchain with K-? in acceptor proteins) linkage. Residues 93-94 (SC) constitute a propeptide that is removed on maturation.

Belongs to the ubiquitin family. SUMO subfamily. Interacts with sae2 and ube2i. Covalently attached to a number of proteins. Polymeric chains can be formed through Lys-11 cross-linking. Post-translationally, cleavage of precursor form by a sentrin-specific protease is necessary for function.

It localises to the cytoplasm. The protein localises to the nucleus. It is found in the PML body. In terms of biological role, ubiquitin-like protein which can be covalently attached to target lysines either as a monomer or as a lysine-linked polymer. Does not seem to be involved in protein degradation and may function as an antagonist of ubiquitin in the degradation process. Plays a role in a number of cellular processes such as nuclear transport, DNA replication and repair, mitosis and signal transduction. Covalent attachment to its substrates requires prior activation by the E1 complex sae1-sae2 and linkage to the E2 enzyme ube2i. The protein is Small ubiquitin-related modifier 3 (sumo3) of Danio rerio (Zebrafish).